The primary structure comprises 179 residues: Translation initiation factor IF-3 (179 aa).

It belongs to the IF-3 family. Monomer.

The protein localises to the cytoplasm. IF-3 binds to the 30S ribosomal subunit and shifts the equilibrium between 70S ribosomes and their 50S and 30S subunits in favor of the free subunits, thus enhancing the availability of 30S subunits on which protein synthesis initiation begins. In Buchnera aphidicola subsp. Acyrthosiphon pisum (strain APS) (Acyrthosiphon pisum symbiotic bacterium), this protein is Translation initiation factor IF-3.